We begin with the raw amino-acid sequence, 144 residues long: Large ribosomal subunit protein uL15 (144 aa).

The interval 1–54 (MRLNTLSPAEGSKKAGKRLGRGIGSGLGKTGGRGHKGQKSRSGGGVRRGFEGGQ) is disordered. The span at 21 to 31 (RGIGSGLGKTG) shows a compositional bias: gly residues.

The protein belongs to the universal ribosomal protein uL15 family. As to quaternary structure, part of the 50S ribosomal subunit.

In terms of biological role, binds to the 23S rRNA. This Salmonella arizonae (strain ATCC BAA-731 / CDC346-86 / RSK2980) protein is Large ribosomal subunit protein uL15.